The following is a 378-amino-acid chain: GTP cyclohydrolase-2 (378 aa).

The interval 1-180 (MEEVSSHVKS…IKDMIEFRIK (180 aa)) is DHBP synthase-like. Residues 181–378 (SEKIVERVIE…KMGHLICFND (198 aa)) are GTP cyclohydrolase II. Residue 229–233 (RIHSE) participates in GTP binding. Zn(2+) contacts are provided by cysteine 234, cysteine 245, and cysteine 247. Residues glutamine 250, 273–275 (EGR), and threonine 295 contribute to the GTP site. Aspartate 307 (proton acceptor) is an active-site residue. The active-site Nucleophile is arginine 309. Residues threonine 330 and lysine 335 each coordinate GTP.

It in the N-terminal section; belongs to the DHBP synthase family. In the C-terminal section; belongs to the GTP cyclohydrolase II family. Zn(2+) is required as a cofactor.

It carries out the reaction GTP + 4 H2O = 2,5-diamino-6-hydroxy-4-(5-phosphoribosylamino)-pyrimidine + formate + 2 phosphate + 3 H(+). It functions in the pathway cofactor biosynthesis; riboflavin biosynthesis; 5-amino-6-(D-ribitylamino)uracil from GTP: step 1/4. In terms of biological role, catalyzes the conversion of GTP to 2,5-diamino-6-ribosylamino-4(3H)-pyrimidinone 5'-phosphate (DARP), formate and pyrophosphate. This Archaeoglobus fulgidus (strain ATCC 49558 / DSM 4304 / JCM 9628 / NBRC 100126 / VC-16) protein is GTP cyclohydrolase-2 (ribA).